Consider the following 148-residue polypeptide: Hut operon positive regulatory protein (148 aa).

This sequence belongs to the HutP family. Homohexamer.

Functionally, antiterminator that binds to cis-acting regulatory sequences on the mRNA in the presence of histidine, thereby suppressing transcription termination and activating the hut operon for histidine utilization. The sequence is that of Hut operon positive regulatory protein from Bacillus velezensis (strain DSM 23117 / BGSC 10A6 / LMG 26770 / FZB42) (Bacillus amyloliquefaciens subsp. plantarum).